The following is a 278-amino-acid chain: Dermonecrotic toxin LhSicTox-alphaIV1ii (278 aa).

The active site involves His-5. Residues Glu-25 and Asp-27 each coordinate Mg(2+). Residue His-41 is the Nucleophile of the active site. 2 cysteine pairs are disulfide-bonded: Cys-45/Cys-51 and Cys-47/Cys-192. A Mg(2+)-binding site is contributed by Asp-85.

The protein belongs to the arthropod phospholipase D family. Class II subfamily. The cofactor is Mg(2+). Expressed by the venom gland.

The protein localises to the secreted. It carries out the reaction an N-(acyl)-sphingosylphosphocholine = an N-(acyl)-sphingosyl-1,3-cyclic phosphate + choline. It catalyses the reaction an N-(acyl)-sphingosylphosphoethanolamine = an N-(acyl)-sphingosyl-1,3-cyclic phosphate + ethanolamine. The catalysed reaction is a 1-acyl-sn-glycero-3-phosphocholine = a 1-acyl-sn-glycero-2,3-cyclic phosphate + choline. The enzyme catalyses a 1-acyl-sn-glycero-3-phosphoethanolamine = a 1-acyl-sn-glycero-2,3-cyclic phosphate + ethanolamine. In terms of biological role, dermonecrotic toxins cleave the phosphodiester linkage between the phosphate and headgroup of certain phospholipids (sphingolipid and lysolipid substrates), forming an alcohol (often choline) and a cyclic phosphate. This toxin acts on sphingomyelin (SM). It may also act on ceramide phosphoethanolamine (CPE), lysophosphatidylcholine (LPC) and lysophosphatidylethanolamine (LPE), but not on lysophosphatidylserine (LPS), and lysophosphatidylglycerol (LPG). It acts by transphosphatidylation, releasing exclusively cyclic phosphate products as second products. Induces dermonecrosis, hemolysis, increased vascular permeability, edema, inflammatory response, and platelet aggregation. The polypeptide is Dermonecrotic toxin LhSicTox-alphaIV1ii (Loxosceles hirsuta (Recluse spider)).